The following is a 132-amino-acid chain: Small ribosomal subunit protein eS24 (132 aa).

A disordered region spans residues 91–132 (LATHGLYEKKKTSRKQRTERQNRMKKVRSIKKASVGAAGKKN). The span at 96-112 (LYEKKKTSRKQRTERQN) shows a compositional bias: basic and acidic residues.

It belongs to the eukaryotic ribosomal protein eS24 family. In terms of assembly, component of the small ribosomal subunit.

The protein resides in the cytoplasm. Its function is as follows. Component of the small ribosomal subunit. The ribosome is a large ribonucleoprotein complex responsible for the synthesis of proteins in the cell. Required for processing of pre-rRNA and maturation of 40S ribosomal subunits. This chain is Small ribosomal subunit protein eS24 (rps24), found in Oryzias latipes (Japanese rice fish).